Consider the following 265-residue polypeptide: Undecaprenyl-diphosphatase (265 aa).

A run of 8 helical transmembrane segments spans residues 7 to 27, 45 to 65, 86 to 106, 108 to 128, 145 to 165, 186 to 206, 214 to 234, and 245 to 265; these read VIVS…PISS, TKIL…YFFH, LHIL…YKKI, LLFN…FLLI, ISLL…YPGF, IEFS…YDFI, ILDL…SILC, and TSLI…YFIN.

Belongs to the UppP family.

The protein localises to the cell membrane. It carries out the reaction di-trans,octa-cis-undecaprenyl diphosphate + H2O = di-trans,octa-cis-undecaprenyl phosphate + phosphate + H(+). In terms of biological role, catalyzes the dephosphorylation of undecaprenyl diphosphate (UPP). Confers resistance to bacitracin. This Buchnera aphidicola subsp. Acyrthosiphon pisum (strain 5A) protein is Undecaprenyl-diphosphatase.